We begin with the raw amino-acid sequence, 391 residues long: Ferrochelatase (391 aa).

Residues His-196 and Glu-281 each coordinate Fe cation.

The protein belongs to the ferrochelatase family.

The protein localises to the cytoplasm. It carries out the reaction heme b + 2 H(+) = protoporphyrin IX + Fe(2+). The protein operates within porphyrin-containing compound metabolism; protoheme biosynthesis; protoheme from protoporphyrin-IX: step 1/1. In terms of biological role, catalyzes the ferrous insertion into protoporphyrin IX. The polypeptide is Ferrochelatase (Synechococcus sp. (strain WH7803)).